The primary structure comprises 325 residues: Brain mitochondrial carrier protein 1 (325 aa).

6 helical membrane passes run 38-54 (GLNW…SIVA), 112-128 (LRQA…YQSL), 141-161 (LLIN…IANP), 199-215 (GVVP…GVEL), 240-256 (VSSF…SNPV), and 298-315 (GFWP…IFFI). Solcar repeat units follow at residues 42–131 (KPFV…LKRL), 139–224 (ETLL…TKKH), and 233–323 (DTIL…LKRL).

This sequence belongs to the mitochondrial carrier (TC 2.A.29) family. Homotetramer. As to expression, mainly expressed in brain. Some expression in testis and pituitary.

The protein localises to the mitochondrion inner membrane. It catalyses the reaction sulfite(in) + sulfate(out) = sulfite(out) + sulfate(in). The catalysed reaction is thiosulfate(in) + sulfate(out) = thiosulfate(out) + sulfate(in). It carries out the reaction sulfate(out) + phosphate(in) = sulfate(in) + phosphate(out). The enzyme catalyses oxalate(in) + sulfate(out) = oxalate(out) + sulfate(in). It catalyses the reaction malonate(in) + sulfate(out) = malonate(out) + sulfate(in). The catalysed reaction is maleate(in) + sulfate(out) = maleate(out) + sulfate(in). It carries out the reaction (S)-malate(in) + sulfate(out) = (S)-malate(out) + sulfate(in). The enzyme catalyses (3S)-citramalate(in) + sulfate(out) = (3S)-citramalate(out) + sulfate(in). It catalyses the reaction (3R)-citramalate(in) + sulfate(out) = (3R)-citramalate(out) + sulfate(in). The catalysed reaction is sulfate(out) + succinate(in) = sulfate(in) + succinate(out). It carries out the reaction (S,S)-tartrate(in) + sulfate(out) = (S,S)-tartrate(out) + sulfate(in). The enzyme catalyses (2R,3R)-tartrate(in) + sulfate(out) = (2R,3R)-tartrate(out) + sulfate(in). It catalyses the reaction D-aspartate(in) + sulfate(out) = D-aspartate(out) + sulfate(in). The catalysed reaction is L-aspartate(in) + sulfate(out) = L-aspartate(out) + sulfate(in). It carries out the reaction sulfate(in) = sulfate(out). The enzyme catalyses phosphate(in) = phosphate(out). It catalyses the reaction (S)-malate(out) = (S)-malate(in). The catalysed reaction is citrate(in) = citrate(out). It carries out the reaction L-aspartate(out) = L-aspartate(in). The enzyme catalyses L-glutamate(out) = L-glutamate(in). It catalyses the reaction H(+)(in) = H(+)(out). The catalysed reaction is chloride(in) = chloride(out). With respect to regulation, increased activity at pH lower than 8.0. sulfate/sulfate exchange activity is inhibited strongly by pyridoxal 5'-phosphate, bathophenanthroline and the organic mercurials mersalyl, p-chloromercuribenzoate and HgCl2. Proton conductance is activated by cardiolipin and long-chain free fatty acids and inhibited by purine nucleotides ATP and ADP. Chloride ion transporter activity is inhibited by long-chain free fatty acids. Transports inorganic anions (sulfate, sulfite, thiosulfate and phosphate) and, to a lesser extent, a variety of dicarboxylates (e.g. malonate, malate and citramalate) and, even more so, aspartate and glutamate and tricarboxylates. May catalyze the export of sulfite and thiosulfate (the hydrogen sulfide degradation products) from the mitochondria, thereby modulating the level of the hydrogen sulfide. Also can mediate a very low unidirectional transport of anions including sulfate, phosphate, (S)-malate, citrate, L-aspartate and L-glutamate. Maintains oxidative balance (through uncoupling activities) and ATP production (by modifying mitochondrial membrane potential). Is able to transport protons across lipid membranes. Also exhibits transmembrane chloride transport activity to a lesser extent. May modify mitochondrial respiratory efficiency and mitochondrial oxidant production. The polypeptide is Brain mitochondrial carrier protein 1 (Homo sapiens (Human)).